Reading from the N-terminus, the 307-residue chain is Aspartate carbamoyltransferase catalytic subunit (307 aa).

R58 and T59 together coordinate carbamoyl phosphate. K86 contacts L-aspartate. Carbamoyl phosphate-binding residues include R108, H136, and Q139. L-aspartate contacts are provided by R169 and R223. 2 residues coordinate carbamoyl phosphate: G264 and P265.

Belongs to the aspartate/ornithine carbamoyltransferase superfamily. ATCase family. As to quaternary structure, heterododecamer (2C3:3R2) of six catalytic PyrB chains organized as two trimers (C3), and six regulatory PyrI chains organized as three dimers (R2).

The enzyme catalyses carbamoyl phosphate + L-aspartate = N-carbamoyl-L-aspartate + phosphate + H(+). Its pathway is pyrimidine metabolism; UMP biosynthesis via de novo pathway; (S)-dihydroorotate from bicarbonate: step 2/3. Functionally, catalyzes the condensation of carbamoyl phosphate and aspartate to form carbamoyl aspartate and inorganic phosphate, the committed step in the de novo pyrimidine nucleotide biosynthesis pathway. In Moorella thermoacetica (strain ATCC 39073 / JCM 9320), this protein is Aspartate carbamoyltransferase catalytic subunit.